The chain runs to 128 residues: uncharacterized protein (128 aa).

The protein to M.jannaschii MJ0766.

This is an uncharacterized protein from Methanocaldococcus jannaschii (strain ATCC 43067 / DSM 2661 / JAL-1 / JCM 10045 / NBRC 100440) (Methanococcus jannaschii).